Reading from the N-terminus, the 71-residue chain is Disintegrin horridistatin-2 (71 aa).

Positions 1–71 constitute a Disintegrin domain; it reads GEECDCGSPA…ADCPRNGLYG (71 aa). Disulfide bonds link Cys-4–Cys-19, Cys-6–Cys-14, Cys-13–Cys-36, Cys-27–Cys-33, Cys-32–Cys-57, and Cys-45–Cys-64. Positions 49-51 match the Cell attachment site motif; the sequence is RGD.

Belongs to the venom metalloproteinase (M12B) family. P-II subfamily. P-IIa sub-subfamily. Monomer (disintegrin). In terms of tissue distribution, expressed by the venom gland.

Its subcellular location is the secreted. In terms of biological role, inhibits ADP-induced platelet aggregation (IC(50) is 16.2 nM) by binding to alpha-IIb/beta-3 (ITGA2B/ITGB3). In Crotalus horridus (Timber rattlesnake), this protein is Disintegrin horridistatin-2.